The sequence spans 149 residues: Large ribosomal subunit protein bL9 (149 aa).

The protein belongs to the bacterial ribosomal protein bL9 family.

In terms of biological role, binds to the 23S rRNA. The protein is Large ribosomal subunit protein bL9 of Glaesserella parasuis serovar 5 (strain SH0165) (Haemophilus parasuis).